Reading from the N-terminus, the 182-residue chain is Bis(5'-nucleosyl)-tetraphosphatase [asymmetrical] (182 aa).

An HIT domain is found at 3-110; that stretch reads KQLYFSKFPV…IPRKKADFSE (108 aa). Substrate contacts are provided by residues N28, Q84, and 90–93; that span reads GQTV. A Histidine triad motif motif is present at residues 95–99; that stretch reads HVHVH. H97 functions as the Tele-AMP-histidine intermediate in the catalytic mechanism. Position 99 (H99) interacts with substrate. The interval 135 to 161 is disordered; sequence RYAGDERPPTSMRQAIPKDEDRKPRTL. Residues 150–161 are compositionally biased toward basic and acidic residues; sequence IPKDEDRKPRTL.

The catalysed reaction is P(1),P(4)-bis(5'-guanosyl) tetraphosphate + H2O = GMP + GTP + 2 H(+). Its function is as follows. Asymmetrically hydrolyzes Ap4A to yield AMP and ATP. This is Bis(5'-nucleosyl)-tetraphosphatase [asymmetrical] (aph1) from Schizosaccharomyces pombe (strain 972 / ATCC 24843) (Fission yeast).